The following is a 62-amino-acid chain: Snaclec aspercetin subunit alpha (62 aa).

A disulfide bridge links Cys-2 with Cys-13. Residues 9 to 62 (YEGHCYRFFHPPKDWADAERFCTEQAKGGALVSIQRFGEEDFVSNLITKNLQRG) form the C-type lectin domain.

The protein belongs to the snaclec family. In terms of assembly, heterodimer; disulfide-linked. In terms of tissue distribution, expressed by the venom gland.

The protein resides in the secreted. Its function is as follows. Snaclec that binds to von Willebrand factor (VWF) and induces its interaction with GPIbalpha (GP1BA) (via the vWF A1 domain), resulting in platelet aggregation. Intravenous injection in mice induces a dose-dependent drop in platelet count (thrombocytopenia). Pretreatment by intravenous injection by this protein in mice potentiates the hemorrhagic lesion in the skin provoked by the metalloproteinase BaP1 intradermally injected. This result is not observed when both BaP1 and this protein are injected simultaneously. The polypeptide is Snaclec aspercetin subunit alpha (Bothrops asper (Terciopelo)).